Reading from the N-terminus, the 307-residue chain is Ribonuclease Z (307 aa).

Residues His-61, His-63, Asp-65, His-66, His-138, Asp-208, and His-264 each coordinate Zn(2+). The Proton acceptor role is filled by Asp-65.

It belongs to the RNase Z family. In terms of assembly, homodimer. The cofactor is Zn(2+).

The catalysed reaction is Endonucleolytic cleavage of RNA, removing extra 3' nucleotides from tRNA precursor, generating 3' termini of tRNAs. A 3'-hydroxy group is left at the tRNA terminus and a 5'-phosphoryl group is left at the trailer molecule.. Its function is as follows. Zinc phosphodiesterase, which displays some tRNA 3'-processing endonuclease activity. Probably involved in tRNA maturation, by removing a 3'-trailer from precursor tRNA. The protein is Ribonuclease Z of Pyrococcus abyssi (strain GE5 / Orsay).